The chain runs to 488 residues: Probable glycine dehydrogenase (decarboxylating) subunit 2 (488 aa).

Lys274 is subject to N6-(pyridoxal phosphate)lysine.

Belongs to the GcvP family. C-terminal subunit subfamily. As to quaternary structure, the glycine cleavage system is composed of four proteins: P, T, L and H. In this organism, the P 'protein' is a heterodimer of two subunits. Pyridoxal 5'-phosphate is required as a cofactor.

The enzyme catalyses N(6)-[(R)-lipoyl]-L-lysyl-[glycine-cleavage complex H protein] + glycine + H(+) = N(6)-[(R)-S(8)-aminomethyldihydrolipoyl]-L-lysyl-[glycine-cleavage complex H protein] + CO2. In terms of biological role, the glycine cleavage system catalyzes the degradation of glycine. The P protein binds the alpha-amino group of glycine through its pyridoxal phosphate cofactor; CO(2) is released and the remaining methylamine moiety is then transferred to the lipoamide cofactor of the H protein. This is Probable glycine dehydrogenase (decarboxylating) subunit 2 from Listeria innocua serovar 6a (strain ATCC BAA-680 / CLIP 11262).